The chain runs to 111 residues: Large ribosomal subunit protein eL31 (111 aa).

The protein belongs to the eukaryotic ribosomal protein eL31 family.

The sequence is that of Large ribosomal subunit protein eL31 (RPL31) from Encephalitozoon cuniculi (strain GB-M1) (Microsporidian parasite).